We begin with the raw amino-acid sequence, 265 residues long: GTP cyclohydrolase FolE2 (265 aa).

Belongs to the GTP cyclohydrolase IV family.

It carries out the reaction GTP + H2O = 7,8-dihydroneopterin 3'-triphosphate + formate + H(+). The protein operates within cofactor biosynthesis; 7,8-dihydroneopterin triphosphate biosynthesis; 7,8-dihydroneopterin triphosphate from GTP: step 1/1. Functionally, converts GTP to 7,8-dihydroneopterin triphosphate. The protein is GTP cyclohydrolase FolE2 of Bordetella bronchiseptica (strain ATCC BAA-588 / NCTC 13252 / RB50) (Alcaligenes bronchisepticus).